The sequence spans 244 residues: 2,3-bisphosphoglycerate-dependent phosphoglycerate mutase (244 aa).

Substrate-binding positions include 8–15, 21–22, arginine 60, 87–90, lysine 98, 114–115, and 181–182; these read RHGESNWN, TG, ERHY, RR, and GN. Histidine 9 serves as the catalytic Tele-phosphohistidine intermediate. The active-site Proton donor/acceptor is glutamate 87.

Belongs to the phosphoglycerate mutase family. BPG-dependent PGAM subfamily.

It catalyses the reaction (2R)-2-phosphoglycerate = (2R)-3-phosphoglycerate. Its pathway is carbohydrate degradation; glycolysis; pyruvate from D-glyceraldehyde 3-phosphate: step 3/5. Catalyzes the interconversion of 2-phosphoglycerate and 3-phosphoglycerate. The polypeptide is 2,3-bisphosphoglycerate-dependent phosphoglycerate mutase (Frankia alni (strain DSM 45986 / CECT 9034 / ACN14a)).